A 1470-amino-acid polypeptide reads, in one-letter code: Histone acetyltransferase HAC4 (1470 aa).

The span at 1–10 (MNNNKEVPQN) shows a compositional bias: polar residues. Disordered stretches follow at residues 1–20 (MNNN…SSSA) and 342–376 (TNFQ…HSQN). Residues 11-20 (SVAVSSSSSA) are compositionally biased toward low complexity. A compositionally biased stretch (polar residues) spans 342 to 365 (TNFQSAPNNRDNLPQVSQQLSNHG). A TAZ-type 1 zinc finger spans residues 416–495 (GQTSSNTVLR…SISCRTCVAV (80 aa)). Residues 518 to 566 (SSKCQPKKSSKSRQAYKKGGAEAPSVDADLQRSIKRPKLHRPSQNITPE) are disordered. Positions 522–533 (QPKKSSKSRQAY) are enriched in basic residues. The PHD-type zinc-finger motif lies at 764–841 (HYVCAPCYNE…KYTCPSCYIQ (78 aa)). Residues 856–1293 (VPGATSLPVT…ILYHLHNPTA (438 aa)) form the CBP/p300-type HAT domain. Acetyl-CoA is bound by residues 979-981 (LDS), 998-999 (RT), and W1054. 2 ZZ-type zinc fingers span residues 1175 to 1238 (HLQH…IKDV) and 1295 to 1347 (AFAT…SSTD). 16 residues coordinate Zn(2+): C1180, C1183, C1195, C1198, C1204, C1207, H1220, H1228, C1300, C1303, C1315, C1318, C1324, C1327, H1335, and H1337. A TAZ-type 2 zinc finger spans residues 1358-1436 (SQSYQVKLEK…KCTVPKCSGL (79 aa)).

Rosette leaves, stems and flowers.

The protein localises to the nucleus. The enzyme catalyses L-lysyl-[protein] + acetyl-CoA = N(6)-acetyl-L-lysyl-[protein] + CoA + H(+). Its function is as follows. Acetyltransferase enzyme. Acetylates histones, giving a specific tag for transcriptional activation. This is Histone acetyltransferase HAC4 (HAC4) from Arabidopsis thaliana (Mouse-ear cress).